Consider the following 512-residue polypeptide: Probable malate:quinone oxidoreductase (512 aa).

This sequence belongs to the MQO family. The cofactor is FAD.

The enzyme catalyses (S)-malate + a quinone = a quinol + oxaloacetate. It functions in the pathway carbohydrate metabolism; tricarboxylic acid cycle; oxaloacetate from (S)-malate (quinone route): step 1/1. This chain is Probable malate:quinone oxidoreductase, found in Bradyrhizobium diazoefficiens (strain JCM 10833 / BCRC 13528 / IAM 13628 / NBRC 14792 / USDA 110).